Consider the following 513-residue polypeptide: ATP synthase subunit alpha (513 aa).

169-176 (GDRQTGKT) lines the ATP pocket.

The protein belongs to the ATPase alpha/beta chains family. In terms of assembly, F-type ATPases have 2 components, CF(1) - the catalytic core - and CF(0) - the membrane proton channel. CF(1) has five subunits: alpha(3), beta(3), gamma(1), delta(1), epsilon(1). CF(0) has three main subunits: a(1), b(2) and c(9-12). The alpha and beta chains form an alternating ring which encloses part of the gamma chain. CF(1) is attached to CF(0) by a central stalk formed by the gamma and epsilon chains, while a peripheral stalk is formed by the delta and b chains.

The protein localises to the cell inner membrane. It carries out the reaction ATP + H2O + 4 H(+)(in) = ADP + phosphate + 5 H(+)(out). Its function is as follows. Produces ATP from ADP in the presence of a proton gradient across the membrane. The alpha chain is a regulatory subunit. In Bordetella avium (strain 197N), this protein is ATP synthase subunit alpha.